Consider the following 204-residue polypeptide: STPVDPKTKANALIDSLPGNSFLSKTGILATTAAASVYAISSELYVVNDESILLVTFLGFIALISKTVAPLYGEMAKNRTDHVVGLLNQARADHVNAVKTRIDQVSNLKDVVSTTKALFEMSKETAALEAEAFELKQKVAVASEAKSVLDSWVRYEAQVRQHEQEQLASTVISKVQSELQNAKFQDKVLAQAVEEVERLFAKEK.

2 consecutive transmembrane segments (helical) span residues 27–47 (GILA…LYVV) and 52–72 (ILLV…APLY).

F-type ATP synthases have 2 components, the catalytic core F(1) and the membrane-embedded component F(0), linked together by a central stalk and a peripheral stalk. The central stalk, also called rotor shaft, is often seen as part of F(1). The peripheral stalk is seen as part of F(0). F(0) contains the membrane channel next to the rotor. F-type ATP synthases form dimers but each monomer functions independently in ATP generation. The dimer consists of 18 different polypeptides: ATP1 (subunit alpha, part of F(1), 3 molecules per monomer), ATP2 (subunit beta, part of F(1), 3 molecules per monomer), ATP3 (subunit gamma, part of the central stalk), ATP4 (subunit b, part of the peripheral stalk), ATP5/OSCP (subunit 5/OSCP, part of the peripheral stalk), ATP6 (subunit a, part of the peripheral stalk), ATP7 (subunit d, part of the peripheral stalk), ATP8 (subunit 8, part of the peripheral stalk), OLI1 (subunit c, part of the rotor, 10 molecules per monomer), ATP14 (subunit h, part of the peripheral stalk), ATP15 (subunit epsilon, part of the central stalk), ATP16 (subunit delta, part of the central stalk), ATP17 (subunit f, part of the peripheral stalk), ATP18 (subunit i/j, part of the peripheral stalk). Dimer-specific subunits are ATP19 (subunit k, at interface between monomers), ATP20 (subunit g, at interface between monomers), TIM11 (subunit e, at interface between monomers). Also contains subunit L.

Its subcellular location is the mitochondrion inner membrane. In terms of biological role, mitochondrial membrane ATP synthase (F(1)F(0) ATP synthase or Complex V) produces ATP from ADP in the presence of a proton gradient across the membrane which is generated by electron transport complexes of the respiratory chain. F-type ATP synthases consist of two structural domains, F(1) - containing the extramembraneous catalytic core, and F(0) - containing the membrane proton channel, linked together by a central stalk and a peripheral stalk. During catalysis, ATP synthesis in the catalytic domain of F(1) is coupled via a rotary mechanism of the central stalk subunits to proton translocation. Part of the complex F(0) domain and the peripheral stalk, which acts as a stator to hold the catalytic alpha/ATP1(3)beta/ATP2(3) subcomplex and subunit a/ATP6 static relative to the rotary elements. The chain is ATP synthase subunit 4, mitochondrial from Pichia angusta (Yeast).